The sequence spans 161 residues: MTKKALFTGSFDPVTNGHLDIIERASYLFDHVYIGLFYNLEKQGYFSIECRKKMLEEAIRQFKNVSVLVAQDRLAVDLAREVGAKYFVRGLRNSQDFDYEANLEFFNKQLADDIETVYLSTSPSLSPISSSRIRELIYFKASVKPFVPKSVVREVEKMSEE.

Ser-10 provides a ligand contact to substrate. ATP contacts are provided by residues 10–11 (SF) and His-18. The substrate site is built by Lys-42, Ala-75, and Arg-89. ATP-binding positions include 90 to 92 (GLR), Glu-100, and 125 to 131 (LSPISSS).

The protein belongs to the bacterial CoaD family. As to quaternary structure, homohexamer. Requires Mg(2+) as cofactor.

It is found in the cytoplasm. The catalysed reaction is (R)-4'-phosphopantetheine + ATP + H(+) = 3'-dephospho-CoA + diphosphate. It functions in the pathway cofactor biosynthesis; coenzyme A biosynthesis; CoA from (R)-pantothenate: step 4/5. Reversibly transfers an adenylyl group from ATP to 4'-phosphopantetheine, yielding dephospho-CoA (dPCoA) and pyrophosphate. The chain is Phosphopantetheine adenylyltransferase from Streptococcus agalactiae serotype III (strain NEM316).